The sequence spans 564 residues: Forkhead transcription factor HCM1 (564 aa).

The interval 33–80 (DEKEMITPPSSTVRKTMKEVNKRPSHPLSPDHSSPIAPSKAKRQRSDT) is disordered. Residues 58–67 (HPLSPDHSSP) are compositionally biased toward low complexity. Positions 108–199 (KKPPYSYATL…KFFKGENRGY (92 aa)) form a DNA-binding region, fork-head. Over residues 224-241 (QVESGEGNDDLPDEEERE) the composition is skewed to acidic residues. Residues 224–246 (QVESGEGNDDLPDEEEREEAGKF) are disordered. A Phosphothreonine modification is found at Thr-342. The segment at 401–448 (SKPQSQQSYSNSQLPPPPSSHGSDLLKTPKMRHSDGLEKTPSRLISTP) is disordered. Residues 402–413 (KPQSQQSYSNSQ) show a composition bias toward polar residues. Positions 432 to 441 (RHSDGLEKTP) are enriched in basic and acidic residues. Position 496 is a phosphoserine (Ser-496). Positions 536-564 (SDGNNTTDSNQKHHPYHNHPSNDSGNEKN) are disordered. Over residues 554 to 564 (HPSNDSGNEKN) the composition is skewed to polar residues.

Post-translationally, phosphorylated by CDK1.

Its subcellular location is the cytoplasm. It localises to the nucleus. In terms of biological role, transcription factor regulating the cell cycle specific transcription of a spindle pole body (SPB) calmodulin binding protein SPC110. Required for full induction of SPC110 transcription in late G1. Binds to DNA consensus sequence 5'-[AT]AA[TC]AAACAA[AT]-3'. Dosage dependent suppressor of calmodulin mutants which have specific defects in SPB assembly. The chain is Forkhead transcription factor HCM1 (HCM1) from Saccharomyces cerevisiae (strain ATCC 204508 / S288c) (Baker's yeast).